The primary structure comprises 989 residues: Serine-repeat antigen protein 5 (989 aa).

An N-terminal signal peptide occupies residues 1–16; it reads MKSYISLFFILCVIFN. 2 disordered regions span residues 26–91 and 165–245; these read SQTG…EKQD and LPSN…RNLQ. Composition is skewed to low complexity over residues 52 to 87, 167 to 180, and 191 to 225; these read QGST…STSS, SNGT…STGT, and SSSS…SSSS. Serine 167 carries the post-translational modification Phosphoserine. Asparagine 168 is a glycosylation site (N-linked (GlcNAc...) asparagine). Residues 208-245 form an interaction with PTKL region; sequence SSSSSSSSSSSSSSSSSSESLPANGPDSPTVKPPRNLQ. The N-linked (GlcNAc...) asparagine glycan is linked to asparagine 310. The interval 365–382 is interaction with host VTN; sequence YKYLSEDIVSNFKEIKAE. Residues cysteine 437 and cysteine 489 are joined by a disulfide bond. The residue at position 541 (threonine 541) is a Phosphothreonine. Disulfide bonds link cysteine 559–cysteine 564, cysteine 573–cysteine 602, cysteine 585–cysteine 628, cysteine 619–cysteine 664, and cysteine 747–cysteine 801. A thiol-protease-like region spans residues 571–989; sequence NNCISNLQVE…TNNECYFCYV (419 aa). Active-site residues include histidine 754 and asparagine 779. The N-linked (GlcNAc...) asparagine glycan is linked to asparagine 820. The propeptide at 835-878 is inhibition peptide; the sequence is KASPEFYHNLYFKNFNVGKKNLFSEKEDNENNKKLGNNYIIFGQ. A Phosphoserine modification is found at serine 858.

Belongs to the peptidase C1 family. As to quaternary structure, may interact (via C-terminus) with PTKL (via SAM domain). Interacts (via C-terminus) with human VTN (via hemopexin repeat 2); may form heterotetramers of two VTN and SERA5 P47 heterodimers; the interaction may protect merozoites from phagocytosis by host monocytes; VTN glycosylation appears to be dispensable for the interaction. In terms of assembly, monomer. Interacts with kinase CPK1/CDPK1 at the schizont stage. Post-translationally, phosphorylation by CPK1/CDPK1 increases SERA5 protease activity towards a synthetic peptide in vitro. In terms of processing, just prior to merozoite egress from host erythrocytes, proteolytically cleaved into multiple fragments. Cleaved by SUB1 into p47 and p73, p73 is further cleaved by SUB1 into p56 and p18 and p56 is further processed into p50 by an unidentified protease. p47 remains covalently associated with p18 via disulfide bond. p47 can be processed into p25n and p25c by SUB1. p25c and p25n remain associated with p18. Proteolytic processing is essential for merozoite egress from host erythrocytes. The cleavage of the propeptide to produce p50 is necessary for protease activity and to promote merozoite egress.

It localises to the parasitophorous vacuole. The protein localises to the secreted. It is found in the cell membrane. Its function is as follows. Plays an essential role during the asexual blood stage development by controlling the kinetics of merozoite egress from host erythrocytes. Specifically, prevents premature rupture of the parasitophorous vacuole and host erythrocyte membranes. In terms of biological role, may prevent merozoite phagocytosis by host monocytes via interaction with host VTN at the merozoite surface. Plays a role in parasite growth. Functionally, protease activity is controversial. This chain is Serine-repeat antigen protein 5, found in Plasmodium falciparum (isolate CDC / Honduras).